A 482-amino-acid chain; its full sequence is MSATSPAAVVVLAAGEGTRMKSKTPKVLHEISGRSLVGHVVAAARELDPQHLVVVVGHAREQVTAHLDAGDAPVRTAFQAEQNGTGHAVRMGLEELGGAVEGTVIVVCGDTPLLSGTTLGALAATHAADANAVTVLSAEVPDSTGYGRIVRDPATGAVTEIVEHKDATDEQRAIREINSGVFAFDGRLLGDALGKVRTDNSQGEEYLTDVLSILREAGHRVGACVAGDHREILGINNRLQLAEARRLLNERLLERAMLAGVTVVDPASTLIDATVTYERDAVVHPGTQLLGTTHLAEDSEVGPNARIENTAVGAGARVDNSVTLSAEIGAGALVGPYAYLRPGTRLGTKAKAGTYVEMKNATIGEGTKVPHLSYVGDATIGDHTNIGAASVFVNYDGVAKHHTTIGSHCRTGSDNMFVAPVTVGDGVYTAAGSVITKDVPAGSLAVARGQQRNIEGWVARKRPGSAAAQAAQASSQETDGQS.

The pyrophosphorylase stretch occupies residues 1–238 (MSATSPAAVV…HREILGINNR (238 aa)). UDP-N-acetyl-alpha-D-glucosamine is bound by residues 12-15 (LAAG), Lys26, Gln79, and 84-85 (GT). Asp110 is a Mg(2+) binding site. 4 residues coordinate UDP-N-acetyl-alpha-D-glucosamine: Gly147, Glu163, Asn178, and Asn236. Asn236 contacts Mg(2+). Residues 239–259 (LQLAEARRLLNERLLERAMLA) form a linker region. The interval 260-482 (GVTVVDPAST…ASSQETDGQS (223 aa)) is N-acetyltransferase. Positions 341 and 359 each coordinate UDP-N-acetyl-alpha-D-glucosamine. The Proton acceptor role is filled by His371. UDP-N-acetyl-alpha-D-glucosamine is bound by residues Tyr374 and Asn385. Acetyl-CoA contacts are provided by residues Ala388, 394–395 (NY), Ser413, Ala431, and Arg448. A disordered region spans residues 458–482 (VARKRPGSAAAQAAQASSQETDGQS). Positions 465 to 476 (SAAAQAAQASSQ) are enriched in low complexity.

This sequence in the N-terminal section; belongs to the N-acetylglucosamine-1-phosphate uridyltransferase family. The protein in the C-terminal section; belongs to the transferase hexapeptide repeat family. In terms of assembly, homotrimer. It depends on Mg(2+) as a cofactor.

It is found in the cytoplasm. It carries out the reaction alpha-D-glucosamine 1-phosphate + acetyl-CoA = N-acetyl-alpha-D-glucosamine 1-phosphate + CoA + H(+). The catalysed reaction is N-acetyl-alpha-D-glucosamine 1-phosphate + UTP + H(+) = UDP-N-acetyl-alpha-D-glucosamine + diphosphate. Its pathway is nucleotide-sugar biosynthesis; UDP-N-acetyl-alpha-D-glucosamine biosynthesis; N-acetyl-alpha-D-glucosamine 1-phosphate from alpha-D-glucosamine 6-phosphate (route II): step 2/2. It functions in the pathway nucleotide-sugar biosynthesis; UDP-N-acetyl-alpha-D-glucosamine biosynthesis; UDP-N-acetyl-alpha-D-glucosamine from N-acetyl-alpha-D-glucosamine 1-phosphate: step 1/1. It participates in bacterial outer membrane biogenesis; LPS lipid A biosynthesis. Catalyzes the last two sequential reactions in the de novo biosynthetic pathway for UDP-N-acetylglucosamine (UDP-GlcNAc). The C-terminal domain catalyzes the transfer of acetyl group from acetyl coenzyme A to glucosamine-1-phosphate (GlcN-1-P) to produce N-acetylglucosamine-1-phosphate (GlcNAc-1-P), which is converted into UDP-GlcNAc by the transfer of uridine 5-monophosphate (from uridine 5-triphosphate), a reaction catalyzed by the N-terminal domain. This Streptomyces griseus subsp. griseus (strain JCM 4626 / CBS 651.72 / NBRC 13350 / KCC S-0626 / ISP 5235) protein is Bifunctional protein GlmU.